The following is a 361-amino-acid chain: Phosphoserine aminotransferase (361 aa).

Residue Arg43 participates in L-glutamate binding. Pyridoxal 5'-phosphate-binding positions include 77–78 (AS), Trp103, Thr153, Asp173, and Gln196. Residue Lys197 is modified to N6-(pyridoxal phosphate)lysine. Position 238–239 (238–239 (NT)) interacts with pyridoxal 5'-phosphate.

This sequence belongs to the class-V pyridoxal-phosphate-dependent aminotransferase family. SerC subfamily. Homodimer. Pyridoxal 5'-phosphate is required as a cofactor.

It is found in the cytoplasm. It catalyses the reaction O-phospho-L-serine + 2-oxoglutarate = 3-phosphooxypyruvate + L-glutamate. The enzyme catalyses 4-(phosphooxy)-L-threonine + 2-oxoglutarate = (R)-3-hydroxy-2-oxo-4-phosphooxybutanoate + L-glutamate. It participates in amino-acid biosynthesis; L-serine biosynthesis; L-serine from 3-phospho-D-glycerate: step 2/3. The protein operates within cofactor biosynthesis; pyridoxine 5'-phosphate biosynthesis; pyridoxine 5'-phosphate from D-erythrose 4-phosphate: step 3/5. In terms of biological role, catalyzes the reversible conversion of 3-phosphohydroxypyruvate to phosphoserine and of 3-hydroxy-2-oxo-4-phosphonooxybutanoate to phosphohydroxythreonine. This chain is Phosphoserine aminotransferase, found in Stutzerimonas stutzeri (Pseudomonas stutzeri).